The following is a 360-amino-acid chain: UDP-N-acetylglucosamine--N-acetylmuramyl-(pentapeptide) pyrophosphoryl-undecaprenol N-acetylglucosamine transferase (360 aa).

UDP-N-acetyl-alpha-D-glucosamine-binding positions include 12–14 (TAG), Ser198, and Gln289.

Belongs to the glycosyltransferase 28 family. MurG subfamily.

Its subcellular location is the cell membrane. The enzyme catalyses Mur2Ac(oyl-L-Ala-gamma-D-Glu-L-Lys-D-Ala-D-Ala)-di-trans,octa-cis-undecaprenyl diphosphate + UDP-N-acetyl-alpha-D-glucosamine = beta-D-GlcNAc-(1-&gt;4)-Mur2Ac(oyl-L-Ala-gamma-D-Glu-L-Lys-D-Ala-D-Ala)-di-trans,octa-cis-undecaprenyl diphosphate + UDP + H(+). Its pathway is cell wall biogenesis; peptidoglycan biosynthesis. In terms of biological role, cell wall formation. Catalyzes the transfer of a GlcNAc subunit on undecaprenyl-pyrophosphoryl-MurNAc-pentapeptide (lipid intermediate I) to form undecaprenyl-pyrophosphoryl-MurNAc-(pentapeptide)GlcNAc (lipid intermediate II). This is UDP-N-acetylglucosamine--N-acetylmuramyl-(pentapeptide) pyrophosphoryl-undecaprenol N-acetylglucosamine transferase from Streptococcus equi subsp. zooepidemicus (strain MGCS10565).